We begin with the raw amino-acid sequence, 190 residues long: MAKGLEKFNELVESFANLPTIGKKTAIRLAYHLCINNQIDGMKLAHNIENAIRFIKPCEQCGALSENELCEICSDEERSKNILCIVESPKDILTLEESQSYNGLYFVLDELNEEKLEKLKQILLKLNISELIFALTHSINSDATIFFIEDKFKDLNLTFSKIAQGIPSGVNLENVDLISLNKAMNFRTKI.

The C4-type zinc-finger motif lies at 58 to 73 (CEQCGALSENELCEIC). In terms of domain architecture, Toprim spans 81 to 167 (NILCIVESPK…TFSKIAQGIP (87 aa)).

Belongs to the RecR family.

Its function is as follows. May play a role in DNA repair. It seems to be involved in an RecBC-independent recombinational process of DNA repair. It may act with RecF and RecO. The polypeptide is Recombination protein RecR (Campylobacter jejuni subsp. doylei (strain ATCC BAA-1458 / RM4099 / 269.97)).